We begin with the raw amino-acid sequence, 463 residues long: ATP-dependent protease ATPase subunit HslU (463 aa).

Residues Ile19 and 61–66 (GVGKTE) each bind ATP. The segment at 154-174 (FGGAQNSSQTSDTQEDGEIEK) is disordered. Asp277, Glu341, and Arg413 together coordinate ATP.

Belongs to the ClpX chaperone family. HslU subfamily. A double ring-shaped homohexamer of HslV is capped on each side by a ring-shaped HslU homohexamer. The assembly of the HslU/HslV complex is dependent on binding of ATP.

Its subcellular location is the cytoplasm. Its function is as follows. ATPase subunit of a proteasome-like degradation complex; this subunit has chaperone activity. The binding of ATP and its subsequent hydrolysis by HslU are essential for unfolding of protein substrates subsequently hydrolyzed by HslV. HslU recognizes the N-terminal part of its protein substrates and unfolds these before they are guided to HslV for hydrolysis. The polypeptide is ATP-dependent protease ATPase subunit HslU (Bacillus cereus (strain G9842)).